Consider the following 197-residue polypeptide: Peptidyl-tRNA hydrolase (197 aa).

A tRNA-binding site is contributed by Tyr-18. His-23 acts as the Proton acceptor in catalysis. Positions 69, 71, and 117 each coordinate tRNA.

It belongs to the PTH family. As to quaternary structure, monomer.

It localises to the cytoplasm. It catalyses the reaction an N-acyl-L-alpha-aminoacyl-tRNA + H2O = an N-acyl-L-amino acid + a tRNA + H(+). Functionally, hydrolyzes ribosome-free peptidyl-tRNAs (with 1 or more amino acids incorporated), which drop off the ribosome during protein synthesis, or as a result of ribosome stalling. In terms of biological role, catalyzes the release of premature peptidyl moieties from peptidyl-tRNA molecules trapped in stalled 50S ribosomal subunits, and thus maintains levels of free tRNAs and 50S ribosomes. This is Peptidyl-tRNA hydrolase from Psychromonas ingrahamii (strain DSM 17664 / CCUG 51855 / 37).